A 343-amino-acid polypeptide reads, in one-letter code: Olfactory receptor 6K6 (343 aa).

Residues 1 to 53 lie on the Extracellular side of the membrane; it reads MKQYSVGNQHSNYRSLLFPFLCSQMTQLTASGNQTMVTEFLFSMFPHAHRGGL. Asn33 carries an N-linked (GlcNAc...) asparagine glycan. The chain crosses the membrane as a helical span at residues 54 to 74; the sequence is LFFIPLLLIYGFILTGNLIMF. The Cytoplasmic portion of the chain corresponds to 75–82; that stretch reads IVIQVGMA. Residues 83 to 103 traverse the membrane as a helical segment; the sequence is LHTPLYFFISVLSFLEICYTT. Residues 104 to 127 are Extracellular-facing; the sequence is TTIPKMLSCLISEQKSISVAGCLL. Residues Cys125 and Cys217 are joined by a disulfide bond. The chain crosses the membrane as a helical span at residues 128 to 148; it reads QMYFFHSLGITESCVLTAMAI. Residues 149-167 lie on the Cytoplasmic side of the membrane; that stretch reads DRYIAICNPLRYPTIMIPK. A helical membrane pass occupies residues 168–188; the sequence is LCIQLTVGSCFCGFLLVLPEI. The Extracellular segment spans residues 189–224; sequence AWISTLPFCGSNQIHQIFCDFTPVLSLACTDTFLVV. A helical membrane pass occupies residues 225-244; sequence IVDAIHAAEIVASFLVIALS. The Cytoplasmic segment spans residues 245 to 264; that stretch reads YIRIIIVILGMHSAEGHHKA. A helical transmembrane segment spans residues 265–285; sequence FSTCAAHLAVFLLFFGSVAVM. Residues 286–298 lie on the Extracellular side of the membrane; sequence YLRFSATYSVFWD. A helical membrane pass occupies residues 299-319; the sequence is TAIAVTFVILAPFFNPIIYSL. Topologically, residues 320–343 are cytoplasmic; sequence KNKDMKEAIGRLFHYQKRAGWAGK.

Belongs to the G-protein coupled receptor 1 family.

The protein resides in the cell membrane. Functionally, odorant receptor. This Homo sapiens (Human) protein is Olfactory receptor 6K6 (OR6K6).